Consider the following 386-residue polypeptide: 3-hydroxyisobutyryl-CoA hydrolase, mitochondrial (386 aa).

Residues Met1–Thr32 constitute a mitochondrion transit peptide. The residue at position 92 (Lys92) is an N6-acetyllysine; alternate. Position 92 is an N6-succinyllysine; alternate (Lys92). Glu121, Gly146, Glu169, and Asp177 together coordinate substrate. The residue at position 221 (Lys221) is an N6-acetyllysine; alternate. Lys221 is subject to N6-succinyllysine; alternate. Position 234 is a phosphoserine (Ser234). N6-succinyllysine is present on residues Lys250 and Lys257. Lys297 is modified (N6-acetyllysine; alternate). Lys297 is modified (N6-succinyllysine; alternate). An N6-succinyllysine modification is found at Lys301. Lys353 is subject to N6-acetyllysine; alternate. The residue at position 353 (Lys353) is an N6-succinyllysine; alternate. Residue Ser356 is modified to Phosphoserine. An N6-acetyllysine mark is found at Lys360 and Lys365. Lys377 carries the N6-succinyllysine modification.

The protein belongs to the enoyl-CoA hydratase/isomerase family.

Its subcellular location is the mitochondrion. It catalyses the reaction 3-hydroxy-2-methylpropanoyl-CoA + H2O = 3-hydroxy-2-methylpropanoate + CoA + H(+). Its pathway is amino-acid degradation; L-valine degradation. In terms of biological role, hydrolyzes 3-hydroxyisobutyryl-CoA (HIBYL-CoA), a saline catabolite. Has high activity toward isobutyryl-CoA. Could be an isobutyryl-CoA dehydrogenase that functions in valine catabolism. Also hydrolyzes 3-hydroxypropanoyl-CoA. The polypeptide is 3-hydroxyisobutyryl-CoA hydrolase, mitochondrial (HIBCH) (Bos taurus (Bovine)).